Here is a 157-residue protein sequence, read N- to C-terminus: DNA gyrase inhibitor (157 aa).

It belongs to the DNA gyrase inhibitor family. As to quaternary structure, interacts with DNA gyrase.

The protein localises to the cytoplasm. In terms of biological role, inhibits the supercoiling activity of DNA gyrase. Acts by inhibiting DNA gyrase at an early step, prior to (or at the step of) binding of DNA by the gyrase. It protects cells against toxins that target DNA gyrase, by inhibiting activity of these toxins and reducing the formation of lethal double-strand breaks in the cell. The chain is DNA gyrase inhibitor from Citrobacter rodentium (strain ICC168) (Citrobacter freundii biotype 4280).